A 285-amino-acid chain; its full sequence is GPN-loop GTPase 3 (285 aa).

13–18 (GSGKST) contributes to the GTP binding site. The short motif at 72 to 74 (GPN) is the Gly-Pro-Asn (GPN)-loop; involved in dimer interface element. 174 to 177 (TKMD) lines the GTP pocket. Residues 262-285 (EPKEVDEEPSNSNFDAFFQDTADS) are disordered.

The protein belongs to the GPN-loop GTPase family. Heterodimer with gpn1. Binds to RNA polymerase II (RNAPII).

Functionally, small GTPase required for proper localization of RNA polymerase II (RNAPII). May act at an RNAP assembly step prior to nuclear import. The sequence is that of GPN-loop GTPase 3 from Danio rerio (Zebrafish).